The sequence spans 549 residues: uncharacterized protein (549 aa).

This is an uncharacterized protein from Acanthamoeba polyphaga (Amoeba).